Here is a 756-residue protein sequence, read N- to C-terminus: 3-O-alpha-D-glucosyl-L-rhamnose phosphorylase (756 aa).

358–359 (WD) is a binding site for substrate. The Proton donor role is filled by Glu486. Residue 590–591 (KQ) participates in substrate binding.

This sequence belongs to the glycosyl hydrolase 65 family. As to quaternary structure, monomer.

The protein localises to the cytoplasm. The catalysed reaction is 3-O-alpha-D-glucosyl-L-rhamnose + phosphate = beta-D-glucose 1-phosphate + L-rhamnopyranose. Phosphorylase showing strict alpha-1,3-regioselectivity and producing 3-O-alpha-D-glucopyranosyl-L-rhamnopyranose. Specific for L-rhamnose as acceptor and beta-D-glucose 1-phosphate as donor. Does not phosphorylate alpha,alpha-trehalose, kojibiose, nigerose, or maltose. The sequence is that of 3-O-alpha-D-glucosyl-L-rhamnose phosphorylase from Lachnoclostridium phytofermentans (strain ATCC 700394 / DSM 18823 / ISDg) (Clostridium phytofermentans).